The chain runs to 265 residues: Shikimate dehydrogenase (NADP(+)) (265 aa).

Residues 15–17 (SLS) and threonine 62 each bind shikimate. The Proton acceptor role is filled by lysine 66. The shikimate site is built by asparagine 87 and aspartate 102. Residues 125–129 (GAGGA), 149–154 (NRTLEK), and leucine 209 each bind NADP(+). Tyrosine 211 is a shikimate binding site. Residue glycine 233 coordinates NADP(+).

It belongs to the shikimate dehydrogenase family. As to quaternary structure, homodimer.

It catalyses the reaction shikimate + NADP(+) = 3-dehydroshikimate + NADPH + H(+). It functions in the pathway metabolic intermediate biosynthesis; chorismate biosynthesis; chorismate from D-erythrose 4-phosphate and phosphoenolpyruvate: step 4/7. Functionally, involved in the biosynthesis of the chorismate, which leads to the biosynthesis of aromatic amino acids. Catalyzes the reversible NADPH linked reduction of 3-dehydroshikimate (DHSA) to yield shikimate (SA). The protein is Shikimate dehydrogenase (NADP(+)) of Legionella pneumophila subsp. pneumophila (strain Philadelphia 1 / ATCC 33152 / DSM 7513).